The sequence spans 231 residues: Transcriptional regulator NRG1 (231 aa).

Residue Ser163 is modified to Phosphoserine. 2 consecutive C2H2-type zinc fingers follow at residues 174 to 196 and 202 to 226; these read YICKICARGFTTSGHLARHNRIH and HCCPYKGCTQRFSRHDNCLQHYRTH.

It is found in the nucleus. Its function is as follows. Transcriptional repressor involved in regulation of glucose repression. Binds to UAS-1 in the STA1 promoter. The polypeptide is Transcriptional regulator NRG1 (NRG1) (Saccharomyces cerevisiae (strain ATCC 204508 / S288c) (Baker's yeast)).